A 319-amino-acid polypeptide reads, in one-letter code: Oligopeptide transport ATP-binding protein OppF (319 aa).

The 251-residue stretch at 5–255 (LNLKDLKVYY…PQHIYTKRLL (251 aa)) folds into the ABC transporter domain. An ATP-binding site is contributed by 48 to 55 (GESGSGKS).

It belongs to the ABC transporter superfamily. As to quaternary structure, the complex is composed of two ATP-binding proteins (OppD and OppF), two transmembrane proteins (OppB and OppC) and a solute-binding protein (OppA).

It localises to the cell membrane. It carries out the reaction a [peptide](out) + ATP + H2O = a [peptide](in) + ADP + phosphate + H(+). In terms of biological role, part of the ABC transporter complex OppABCDF involved in the uptake of oligopeptides. Probably responsible for energy coupling to the transport system. Essential for uptake of peptides larger than three amino acids and for growth in milk. The chain is Oligopeptide transport ATP-binding protein OppF (oppF) from Lactococcus lactis subsp. lactis (strain IL1403) (Streptococcus lactis).